Consider the following 477-residue polypeptide: Cysteine--tRNA ligase (477 aa).

A Zn(2+)-binding site is contributed by cysteine 28. The short motif at 30–40 (PTVYDYAHIGN) is the 'HIGH' region element. Zn(2+) is bound by residues cysteine 213, histidine 238, and glutamate 242. Residues 270-274 (KMSKS) carry the 'KMSKS' region motif. Lysine 273 contributes to the ATP binding site.

The protein belongs to the class-I aminoacyl-tRNA synthetase family. In terms of assembly, monomer. Zn(2+) serves as cofactor.

The protein resides in the cytoplasm. The enzyme catalyses tRNA(Cys) + L-cysteine + ATP = L-cysteinyl-tRNA(Cys) + AMP + diphosphate. This Chlamydia trachomatis serovar D (strain ATCC VR-885 / DSM 19411 / UW-3/Cx) protein is Cysteine--tRNA ligase (cysS).